The following is a 380-amino-acid chain: tRNA (guanine(26)-N(2))-dimethyltransferase (380 aa).

Positions 2–374 (ITVNEGSVTI…AGIGEIEEVL (373 aa)) constitute a Trm1 methyltransferase domain. Residues Arg35, Arg65, Asp83, Asp109, and Ala110 each coordinate S-adenosyl-L-methionine. 4 residues coordinate Zn(2+): Cys242, Cys245, Cys261, and Cys264.

Belongs to the class I-like SAM-binding methyltransferase superfamily. Trm1 family.

It catalyses the reaction guanosine(26) in tRNA + 2 S-adenosyl-L-methionine = N(2)-dimethylguanosine(26) in tRNA + 2 S-adenosyl-L-homocysteine + 2 H(+). Dimethylates a single guanine residue at position 26 of a number of tRNAs using S-adenosyl-L-methionine as donor of the methyl groups. The polypeptide is tRNA (guanine(26)-N(2))-dimethyltransferase (Methanothermobacter thermautotrophicus (strain ATCC 29096 / DSM 1053 / JCM 10044 / NBRC 100330 / Delta H) (Methanobacterium thermoautotrophicum)).